Reading from the N-terminus, the 221-residue chain is Very-long-chain (3R)-3-hydroxyacyl-CoA dehydratase PASTICCINO 2A (221 aa).

Residues 1 to 11 (MAGVGSAVRRL) are Cytoplasmic-facing. The helical transmembrane segment at 12-32 (YLSVYNWAVFFGWAQVLYYAV) threads the bilayer. The Lumenal segment spans residues 33 to 51 (TTLLESGHEAVYAAVERPL). The helical transmembrane segment at 52–70 (QFAQTAAFLEILHGLVGLV) threads the bilayer. The Cytoplasmic portion of the chain corresponds to 71-76 (RSPVSA). The helical transmembrane segment at 77–95 (TLPQIGSRLFLTWGILWSF) threads the bilayer. Residues 96 to 100 (PETHS) lie on the Lumenal side of the membrane. A helical membrane pass occupies residues 101–121 (HILVTSLVISWSITEIIRYSF). Topologically, residues 122–141 (FGMKEAFGFAPSWLLWLRYS) are cytoplasmic. A helical transmembrane segment spans residues 142–165 (TFMVLYPTGISSEVGLIYIALPYM). Residues Tyr-147 and Glu-154 contribute to the active site. Residues 166–184 (KASEKYCLRMPNKWNFSFD) lie on the Lumenal side of the membrane. A helical membrane pass occupies residues 185–209 (FFYASILSLAIYVPGSPHMFTYMLA). Topologically, residues 210–221 (QRKKALAKAKAA) are cytoplasmic.

It belongs to the very long-chain fatty acids dehydratase HACD family.

Its subcellular location is the endoplasmic reticulum membrane. The enzyme catalyses a very-long-chain (3R)-3-hydroxyacyl-CoA = a very-long-chain (2E)-enoyl-CoA + H2O. It functions in the pathway lipid metabolism; fatty acid biosynthesis. Functionally, catalyzes the third of the four reactions of the long-chain fatty acids elongation cycle. This endoplasmic reticulum-bound enzymatic process, allows the addition of two carbons to the chain of long- and very long-chain fatty acids/VLCFAs per cycle. This enzyme catalyzes the dehydration of the 3-hydroxyacyl-CoA intermediate into trans-2,3-enoyl-CoA, within each cycle of fatty acid elongation. Thereby, it participates in the production of VLCFAs of different chain lengths that are involved in multiple biological processes as precursors of membrane lipids and lipid mediators. May be an anti-phosphatase that prevents CDKA-1 dephosphorylation and activation. Involved in the hormonal control of cell division and differentiation. Required for proliferation control of meristematic and non-meristematic cells. Negative regulator of the cell cycle. This chain is Very-long-chain (3R)-3-hydroxyacyl-CoA dehydratase PASTICCINO 2A (PAS2A), found in Oryza sativa subsp. japonica (Rice).